A 91-amino-acid chain; its full sequence is MAIKMRLQRFGVHKRPFYRVVASDSRVTRDGKFLDIVGTYDTILNIIKLDNEKVQKWLSCGAQPTQTVKKILKKNFVFQKDNQIKKPQTAK.

The protein belongs to the bacterial ribosomal protein bS16 family.

This chain is Small ribosomal subunit protein bS16, found in Phytoplasma australiense.